Consider the following 197-residue polypeptide: Small ribosomal subunit protein uS4B (197 aa).

Residues 88–151 (CRLDNIAYRI…RKNDEFADNF (64 aa)) enclose the S4 RNA-binding domain.

Belongs to the universal ribosomal protein uS4 family. Part of the 30S ribosomal subunit. Contacts protein S5. The interaction surface between S4 and S5 is involved in control of translational fidelity.

In terms of biological role, one of the primary rRNA binding proteins, it binds directly to 16S rRNA where it nucleates assembly of the body of the 30S subunit. With S5 and S12 plays an important role in translational accuracy. The polypeptide is Small ribosomal subunit protein uS4B (Clostridium botulinum (strain Langeland / NCTC 10281 / Type F)).